The primary structure comprises 323 residues: Fructose-1,6-bisphosphatase class 1 (323 aa).

Mg(2+) is bound by residues Glu-84, Asp-103, Leu-105, and Asp-106. Residues 106–109 (DGSS), Asn-198, and Lys-264 contribute to the substrate site. A Mg(2+)-binding site is contributed by Glu-270.

This sequence belongs to the FBPase class 1 family. Homotetramer. Mg(2+) is required as a cofactor.

It localises to the cytoplasm. The catalysed reaction is beta-D-fructose 1,6-bisphosphate + H2O = beta-D-fructose 6-phosphate + phosphate. Its pathway is carbohydrate biosynthesis; gluconeogenesis. The chain is Fructose-1,6-bisphosphatase class 1 from Hydrogenovibrio crunogenus (strain DSM 25203 / XCL-2) (Thiomicrospira crunogena).